A 446-amino-acid chain; its full sequence is Glutamine synthetase (446 aa).

A GS beta-grasp domain is found at E18 to G103. Positions P110–Y446 constitute a GS catalytic domain. Mg(2+)-binding residues include E134 and E136. E186 serves as a coordination point for ATP. 2 residues coordinate Mg(2+): E191 and E198. Residues N242–G243 and G243 contribute to the L-glutamate site. Position 247 (H247) interacts with Mg(2+). S251 is a binding site for ATP. L-glutamate is bound by residues R300, E306, and R318. Residues R318 and R323 each coordinate ATP. E335 serves as a coordination point for Mg(2+). L-glutamate is bound at residue R337.

Belongs to the glutamine synthetase family. In terms of assembly, oligomer of 12 subunits arranged in the form of two hexagons. In its feedback-inhibited form, interacts with TnrA in order to block its DNA-binding activity. Requires Mg(2+) as cofactor.

The protein localises to the cytoplasm. It catalyses the reaction L-glutamate + NH4(+) + ATP = L-glutamine + ADP + phosphate + H(+). With respect to regulation, inhibited by glutamine. Glutamine synthetase (GS) is an unusual multitasking protein that functions as an enzyme, a transcription coregulator, and a chaperone in ammonium assimilation and in the regulation of genes involved in nitrogen metabolism. It catalyzes the ATP-dependent biosynthesis of glutamine from glutamate and ammonia. Feedback-inhibited GlnA also interacts with and regulates the activity of the transcriptional regulator TnrA. During nitrogen limitation, TnrA is in its DNA-binding active state and turns on the transcription of genes required for nitrogen assimilation. Under conditions of nitrogen excess, feedback-inhibited GlnA forms a stable complex with TnrA, which inhibits its DNA-binding activity. In contrast, feedback-inhibited GlnA acts as a chaperone to stabilize the DNA-binding activity of GlnR, which represses the transcription of nitrogen assimilation genes. The chain is Glutamine synthetase from Staphylococcus aureus (strain N315).